The chain runs to 154 residues: Lipoprotein signal peptidase (154 aa).

Helical transmembrane passes span 57–77 (LVLSAVTLLVLSAIIVYMIKY) and 86–103 (ISLSLVISGALGNLYDRV). Catalysis depends on residues D110 and D129. The helical transmembrane segment at 124–144 (VFNVADICVVVGTIMIAIFIV) threads the bilayer.

The protein belongs to the peptidase A8 family.

It is found in the cell membrane. The catalysed reaction is Release of signal peptides from bacterial membrane prolipoproteins. Hydrolyzes -Xaa-Yaa-Zaa-|-(S,diacylglyceryl)Cys-, in which Xaa is hydrophobic (preferably Leu), and Yaa (Ala or Ser) and Zaa (Gly or Ala) have small, neutral side chains.. It functions in the pathway protein modification; lipoprotein biosynthesis (signal peptide cleavage). This protein specifically catalyzes the removal of signal peptides from prolipoproteins. This is Lipoprotein signal peptidase from Clostridium acetobutylicum (strain ATCC 824 / DSM 792 / JCM 1419 / IAM 19013 / LMG 5710 / NBRC 13948 / NRRL B-527 / VKM B-1787 / 2291 / W).